Consider the following 203-residue polypeptide: ATP phosphoribosyltransferase (203 aa).

This sequence belongs to the ATP phosphoribosyltransferase family. Short subfamily. In terms of assembly, heteromultimer composed of HisG and HisZ subunits.

It localises to the cytoplasm. The enzyme catalyses 1-(5-phospho-beta-D-ribosyl)-ATP + diphosphate = 5-phospho-alpha-D-ribose 1-diphosphate + ATP. The protein operates within amino-acid biosynthesis; L-histidine biosynthesis; L-histidine from 5-phospho-alpha-D-ribose 1-diphosphate: step 1/9. Functionally, catalyzes the condensation of ATP and 5-phosphoribose 1-diphosphate to form N'-(5'-phosphoribosyl)-ATP (PR-ATP). Has a crucial role in the pathway because the rate of histidine biosynthesis seems to be controlled primarily by regulation of HisG enzymatic activity. The polypeptide is ATP phosphoribosyltransferase (Campylobacter fetus subsp. fetus (strain 82-40)).